Reading from the N-terminus, the 662-residue chain is Retaining alpha-galactosidase (662 aa).

A signal peptide spans 1 to 19 (MKKLTFLLLCVLCTLSLQA). Glutamate 174 is a binding site for Ca(2+). Aspartate 415 functions as the Nucleophile in the catalytic mechanism. Positions 464 and 470 each coordinate Ca(2+). The active-site Proton donor/acceptor is glutamate 470.

It belongs to the glycosyl hydrolase 97 family. In terms of assembly, monomer. It depends on Ca(2+) as a cofactor.

It carries out the reaction Hydrolysis of terminal, non-reducing alpha-D-galactose residues in alpha-D-galactosides, including galactose oligosaccharides, galactomannans and galactolipids.. With respect to regulation, inhibited by EDTA in vitro. Functionally, galactosidase that is able to hydrolyze the alpha-1,6 disaccharide melibiose and the synthetic p-nitrophenyl alpha-galactoside substrate (pNP-Gal), with retention of the anomeric configuration. Does not hydrolyze DNP-Glc or pNP-Glc. This Bacteroides thetaiotaomicron (strain ATCC 29148 / DSM 2079 / JCM 5827 / CCUG 10774 / NCTC 10582 / VPI-5482 / E50) protein is Retaining alpha-galactosidase.